A 434-amino-acid chain; its full sequence is 3-phosphoshikimate 1-carboxyvinyltransferase (434 aa).

Positions 22, 23, and 27 each coordinate 3-phosphoshikimate. Phosphoenolpyruvate is bound at residue Lys22. Positions 93 and 121 each coordinate phosphoenolpyruvate. Positions 168, 169, 170, 199, 320, and 347 each coordinate 3-phosphoshikimate. Residue Gln170 participates in phosphoenolpyruvate binding. The active-site Proton acceptor is Asp320. Arg351, Arg395, and Lys420 together coordinate phosphoenolpyruvate.

This sequence belongs to the EPSP synthase family. Monomer.

It localises to the cytoplasm. It carries out the reaction 3-phosphoshikimate + phosphoenolpyruvate = 5-O-(1-carboxyvinyl)-3-phosphoshikimate + phosphate. The protein operates within metabolic intermediate biosynthesis; chorismate biosynthesis; chorismate from D-erythrose 4-phosphate and phosphoenolpyruvate: step 6/7. Its function is as follows. Catalyzes the transfer of the enolpyruvyl moiety of phosphoenolpyruvate (PEP) to the 5-hydroxyl of shikimate-3-phosphate (S3P) to produce enolpyruvyl shikimate-3-phosphate and inorganic phosphate. This chain is 3-phosphoshikimate 1-carboxyvinyltransferase, found in Cupriavidus necator (strain ATCC 17699 / DSM 428 / KCTC 22496 / NCIMB 10442 / H16 / Stanier 337) (Ralstonia eutropha).